A 925-amino-acid polypeptide reads, in one-letter code: Bifunctional uridylyltransferase/uridylyl-removing enzyme (925 aa).

The tract at residues 1 to 382 (MVLPTTKDAT…PPGAEVRRVP (382 aa)) is uridylyltransferase. The tract at residues 383–738 (DSDDFIIDNN…VGFDEARGVT (356 aa)) is uridylyl-removing. The 124-residue stretch at 498–621 (VDEHLIRCIG…VQSVERMKLL (124 aa)) folds into the HD domain. ACT domains follow at residues 739–820 (ELTI…DVMP) and 849–925 (MIEV…NTAE).

This sequence belongs to the GlnD family. Mg(2+) is required as a cofactor.

It catalyses the reaction [protein-PII]-L-tyrosine + UTP = [protein-PII]-uridylyl-L-tyrosine + diphosphate. The enzyme catalyses [protein-PII]-uridylyl-L-tyrosine + H2O = [protein-PII]-L-tyrosine + UMP + H(+). Uridylyltransferase (UTase) activity is inhibited by glutamine, while glutamine activates uridylyl-removing (UR) activity. Modifies, by uridylylation and deuridylylation, the PII regulatory proteins (GlnB and homologs), in response to the nitrogen status of the cell that GlnD senses through the glutamine level. Under low glutamine levels, catalyzes the conversion of the PII proteins and UTP to PII-UMP and PPi, while under higher glutamine levels, GlnD hydrolyzes PII-UMP to PII and UMP (deuridylylation). Thus, controls uridylylation state and activity of the PII proteins, and plays an important role in the regulation of nitrogen assimilation and metabolism. The sequence is that of Bifunctional uridylyltransferase/uridylyl-removing enzyme from Nitrobacter winogradskyi (strain ATCC 25391 / DSM 10237 / CIP 104748 / NCIMB 11846 / Nb-255).